A 605-amino-acid polypeptide reads, in one-letter code: Glutamine--fructose-6-phosphate aminotransferase [isomerizing] (605 aa).

Cysteine 2 acts as the Nucleophile; for GATase activity in catalysis. One can recognise a Glutamine amidotransferase type-2 domain in the interval 2–220; the sequence is CGIVGVTGKD…DGEIVVVKPD (219 aa). SIS domains follow at residues 286 to 426 and 458 to 595; these read LLTA…VDQP and AKSA…VDKP. The For Fru-6P isomerization activity role is filled by lysine 600.

As to quaternary structure, homodimer.

It is found in the cytoplasm. The catalysed reaction is D-fructose 6-phosphate + L-glutamine = D-glucosamine 6-phosphate + L-glutamate. Its function is as follows. Catalyzes the first step in hexosamine metabolism, converting fructose-6P into glucosamine-6P using glutamine as a nitrogen source. In Lactiplantibacillus plantarum (strain ATCC BAA-793 / NCIMB 8826 / WCFS1) (Lactobacillus plantarum), this protein is Glutamine--fructose-6-phosphate aminotransferase [isomerizing].